A 257-amino-acid polypeptide reads, in one-letter code: BTB/POZ domain-containing protein KCTD1 (257 aa).

Residues M1–L25 form a disordered region. Phosphoserine is present on residues S9 and S12. Residues S9 to L25 show a composition bias toward polar residues. The BTB domain maps to A30–D100.

In terms of assembly, forms homopentamers. Interacts with KCTD15, probably forming heteropentamers depending on its abundance in a cell-type dependent manner. Interacts with TFAP2A, TFAP2B and TFAP2C via the BTB domain. Sumoylated. In terms of tissue distribution, expressed in mammary gland, kidney, brain and ovary.

The protein localises to the nucleus. Its function is as follows. May repress the transcriptional activity of AP-2 family members, including TFAP2A, TFAP2B and TFAP2C to various extent. The chain is BTB/POZ domain-containing protein KCTD1 (KCTD1) from Homo sapiens (Human).